A 134-amino-acid polypeptide reads, in one-letter code: ATP synthase epsilon chain, chloroplastic (134 aa).

The protein belongs to the ATPase epsilon chain family. F-type ATPases have 2 components, CF(1) - the catalytic core - and CF(0) - the membrane proton channel. CF(1) has five subunits: alpha(3), beta(3), gamma(1), delta(1), epsilon(1). CF(0) has three main subunits: a, b and c.

The protein resides in the plastid. Its subcellular location is the chloroplast thylakoid membrane. Produces ATP from ADP in the presence of a proton gradient across the membrane. In Pyropia yezoensis (Susabi-nori), this protein is ATP synthase epsilon chain, chloroplastic.